Here is a 254-residue protein sequence, read N- to C-terminus: Zinc transporter GufA (254 aa).

Helical transmembrane passes span 4 to 24 (GLVA…PVLV), 74 to 94 (VAAG…LMPH), 112 to 132 (ALLF…AVGV), 143 to 163 (LSVA…VALA), 176 to 196 (FLAL…VLAL), 198 to 218 (LSSA…LYVI), and 234 to 254 (EATT…MSLG). 6 residues coordinate Zn(2+): asparagine 123, glutamate 126, glutamine 152, asparagine 153, glutamate 156, and glutamate 185.

Belongs to the ZIP transporter (TC 2.A.5) family. As to quaternary structure, homodimer.

It is found in the cell inner membrane. Functionally, mediates the uptake of Zn(2+). The chain is Zinc transporter GufA (gufA) from Myxococcus xanthus.